Here is a 240-residue protein sequence, read N- to C-terminus: Tumor protein p53-inducible nuclear protein 1 (240 aa).

The short motif at 25–37 is the LIR element; that stretch reads EKEDDEWILVDFI.

As to quaternary structure, interacts with p53/TP53 and HIPK2. Interacts with PRKCG, GABARAP, GABARAPL1, GABARAPL2, MAP1LC3A, MAP1LC3B and MAP1LC3C. As to expression, ubiquitously expressed.

It is found in the cytoplasm. Its subcellular location is the cytosol. The protein resides in the nucleus. The protein localises to the PML body. It localises to the cytoplasmic vesicle. It is found in the autophagosome. Its function is as follows. Antiproliferative and proapoptotic protein involved in cell stress response which acts as a dual regulator of transcription and autophagy. Acts as a positive regulator of autophagy. In response to cellular stress or activation of autophagy, relocates to autophagosomes where it interacts with autophagosome-associated proteins GABARAP, GABARAPL1/L2, MAP1LC3A/B/C and regulates autophagy. Acts as an antioxidant and plays a major role in p53/TP53-driven oxidative stress response. Possesses both a p53/TP53-independent intracellular reactive oxygen species (ROS) regulatory function and a p53/TP53-dependent transcription regulatory function. Positively regulates p53/TP53 and p73/TP73 and stimulates their capacity to induce apoptosis and regulate cell cycle. In response to double-strand DNA breaks, promotes p53/TP53 phosphorylation on 'Ser-46' and subsequent apoptosis. Acts as a tumor suppressor by inducing cell death by an autophagy and caspase-dependent mechanism. Can reduce cell migration by regulating the expression of SPARC. In Homo sapiens (Human), this protein is Tumor protein p53-inducible nuclear protein 1 (TP53INP1).